The sequence spans 222 residues: Probable transaldolase (222 aa).

The active-site Schiff-base intermediate with substrate is the K91.

This sequence belongs to the transaldolase family. Type 3B subfamily.

It is found in the cytoplasm. It carries out the reaction D-sedoheptulose 7-phosphate + D-glyceraldehyde 3-phosphate = D-erythrose 4-phosphate + beta-D-fructose 6-phosphate. Its pathway is carbohydrate degradation; pentose phosphate pathway; D-glyceraldehyde 3-phosphate and beta-D-fructose 6-phosphate from D-ribose 5-phosphate and D-xylulose 5-phosphate (non-oxidative stage): step 2/3. In terms of biological role, transaldolase is important for the balance of metabolites in the pentose-phosphate pathway. This chain is Probable transaldolase, found in Chlorobaculum tepidum (strain ATCC 49652 / DSM 12025 / NBRC 103806 / TLS) (Chlorobium tepidum).